A 528-amino-acid polypeptide reads, in one-letter code: tRNA-2-methylthio-N(6)-dimethylallyladenosine synthase (528 aa).

The MTTase N-terminal domain maps to 19-134 (RTYEVRTYGC…LPTLLERARH (116 aa)). Cysteine 28, cysteine 63, cysteine 97, cysteine 171, cysteine 175, and cysteine 178 together coordinate [4Fe-4S] cluster. The region spanning 157 to 387 (RDEIASGWVS…TALQERISHE (231 aa)) is the Radical SAM core domain. Residues 390–460 (QRVVGRTVEV…PFHLIADSVD (71 aa)) form the TRAM domain.

The protein belongs to the methylthiotransferase family. MiaB subfamily. As to quaternary structure, monomer. It depends on [4Fe-4S] cluster as a cofactor.

Its subcellular location is the cytoplasm. The catalysed reaction is N(6)-dimethylallyladenosine(37) in tRNA + (sulfur carrier)-SH + AH2 + 2 S-adenosyl-L-methionine = 2-methylsulfanyl-N(6)-dimethylallyladenosine(37) in tRNA + (sulfur carrier)-H + 5'-deoxyadenosine + L-methionine + A + S-adenosyl-L-homocysteine + 2 H(+). In terms of biological role, catalyzes the methylthiolation of N6-(dimethylallyl)adenosine (i(6)A), leading to the formation of 2-methylthio-N6-(dimethylallyl)adenosine (ms(2)i(6)A) at position 37 in tRNAs that read codons beginning with uridine. This chain is tRNA-2-methylthio-N(6)-dimethylallyladenosine synthase, found in Clavibacter michiganensis subsp. michiganensis (strain NCPPB 382).